A 51-amino-acid polypeptide reads, in one-letter code: Probable antitoxin PhoAT (51 aa).

Belongs to the PhoAT antitoxin family. Interacts with toxin PhoH2.

In terms of biological role, antitoxin component of a type II toxin-antitoxin (TA) system. The cognate antitoxin is PhoAT; the toxin gene cannot be expressed in the absence of the antitoxin gene in M.smegmatis (strain mc(2)4517), and abrogates the toxic effects of PhoH2 in M.smegmatis strain mc(2)155. This is Probable antitoxin PhoAT from Mycobacterium tuberculosis (strain ATCC 25618 / H37Rv).